The primary structure comprises 201 residues: GTP-binding protein ryh1 (201 aa).

18–25 (GEQSVGKT) contributes to the GTP binding site. An Effector region motif is present at residues 40–48 (YQATIGIDF). GTP-binding positions include 66-70 (DTAGQ) and 124-127 (NKTD). Residues Cys199 and Cys201 are each lipidated (S-geranylgeranyl cysteine). Cys201 is modified (cysteine methyl ester).

Belongs to the small GTPase superfamily. Rab family.

It is found in the endosome membrane. The protein localises to the golgi apparatus membrane. The protein resides in the nucleus. Its subcellular location is the cytoplasm. It localises to the cytosol. Functionally, has a role in retrograde traffricking of proteins from the endosome to the Golgi. Involved in protein transport to the plasma membrane. Involved in the secretory pathway where it has a role in acid phosphatase secretion. Required also in normal glycosylation trafficking pathways. This chain is GTP-binding protein ryh1 (ryh1), found in Schizosaccharomyces pombe (strain 972 / ATCC 24843) (Fission yeast).